A 342-amino-acid chain; its full sequence is Holliday junction branch migration complex subunit RuvB (342 aa).

The large ATPase domain (RuvB-L) stretch occupies residues 2–181 (TDNPLLSSAS…FGIPVRLQFY (180 aa)). 9 residues coordinate ATP: Leu20, Arg21, Gly62, Lys65, Thr66, Thr67, Arg171, Tyr181, and Arg218. Thr66 contacts Mg(2+). A small ATPAse domain (RuvB-S) region spans residues 182 to 252 (SVEELERVVA…IADNALTRLE (71 aa)). The interval 255 to 342 (KIGLDLQDRR…QMPGLFGPDE (88 aa)) is head domain (RuvB-H). DNA-binding residues include Arg291, Arg310, and Arg315.

Belongs to the RuvB family. Homohexamer. Forms an RuvA(8)-RuvB(12)-Holliday junction (HJ) complex. HJ DNA is sandwiched between 2 RuvA tetramers; dsDNA enters through RuvA and exits via RuvB. An RuvB hexamer assembles on each DNA strand where it exits the tetramer. Each RuvB hexamer is contacted by two RuvA subunits (via domain III) on 2 adjacent RuvB subunits; this complex drives branch migration. In the full resolvosome a probable DNA-RuvA(4)-RuvB(12)-RuvC(2) complex forms which resolves the HJ.

The protein localises to the cytoplasm. It catalyses the reaction ATP + H2O = ADP + phosphate + H(+). Functionally, the RuvA-RuvB-RuvC complex processes Holliday junction (HJ) DNA during genetic recombination and DNA repair, while the RuvA-RuvB complex plays an important role in the rescue of blocked DNA replication forks via replication fork reversal (RFR). RuvA specifically binds to HJ cruciform DNA, conferring on it an open structure. The RuvB hexamer acts as an ATP-dependent pump, pulling dsDNA into and through the RuvAB complex. RuvB forms 2 homohexamers on either side of HJ DNA bound by 1 or 2 RuvA tetramers; 4 subunits per hexamer contact DNA at a time. Coordinated motions by a converter formed by DNA-disengaged RuvB subunits stimulates ATP hydrolysis and nucleotide exchange. Immobilization of the converter enables RuvB to convert the ATP-contained energy into a lever motion, pulling 2 nucleotides of DNA out of the RuvA tetramer per ATP hydrolyzed, thus driving DNA branch migration. The RuvB motors rotate together with the DNA substrate, which together with the progressing nucleotide cycle form the mechanistic basis for DNA recombination by continuous HJ branch migration. Branch migration allows RuvC to scan DNA until it finds its consensus sequence, where it cleaves and resolves cruciform DNA. The protein is Holliday junction branch migration complex subunit RuvB of Novosphingobium aromaticivorans (strain ATCC 700278 / DSM 12444 / CCUG 56034 / CIP 105152 / NBRC 16084 / F199).